The sequence spans 261 residues: MIVNFISALGKQVIDFFRALGRAGFMLFGALIGKPQIRKHFPLLVKQMHVLGVQSLLIILLSGLFIGMVLGLQGYVVLIDFSAETSLGQLVALSLLRELGPVVTALLFAGRAGSALTAEIGLMKATEQLSSLEMMAVDPLRRVIAPRFWAGVISMPVLSILFIAIGIWGGSLVGVDWKGVDSGSFWSVMQNSVSWSYDILNGFIKAVFFAVAVTWIALFNGYDCMPTSEGISQATTRTVVHASLVVLGLDFILTAIMFGAG.

At 1–12 the chain is on the cytoplasmic side; the sequence is MIVNFISALGKQ. A helical transmembrane segment spans residues 13–33; that stretch reads VIDFFRALGRAGFMLFGALIG. Over 34–49 the chain is Periplasmic; it reads KPQIRKHFPLLVKQMH. A helical membrane pass occupies residues 50 to 70; it reads VLGVQSLLIILLSGLFIGMVL. Over 71–147 the chain is Cytoplasmic; sequence GLQGYVVLID…DPLRRVIAPR (77 aa). Residues 148–168 form a helical membrane-spanning segment; sequence FWAGVISMPVLSILFIAIGIW. Residues 169 to 198 are Periplasmic-facing; the sequence is GGSLVGVDWKGVDSGSFWSVMQNSVSWSYD. Residues 199 to 219 traverse the membrane as a helical segment; it reads ILNGFIKAVFFAVAVTWIALF. The Cytoplasmic segment spans residues 220–238; that stretch reads NGYDCMPTSEGISQATTRT. The helical transmembrane segment at 239–259 threads the bilayer; sequence VVHASLVVLGLDFILTAIMFG. The Periplasmic portion of the chain corresponds to 260–261; it reads AG.

The protein belongs to the MlaE permease family. As to quaternary structure, the complex is composed of two ATP-binding proteins (MlaF), two transmembrane proteins (MlaE), two cytoplasmic solute-binding proteins (MlaB) and six periplasmic solute-binding proteins (MlaD).

The protein resides in the cell inner membrane. In terms of biological role, part of the ABC transporter complex MlaFEDB, which is involved in a phospholipid transport pathway that maintains lipid asymmetry in the outer membrane by retrograde trafficking of phospholipids from the outer membrane to the inner membrane. Probably responsible for the translocation of the substrate across the membrane. In Haemophilus influenzae (strain ATCC 51907 / DSM 11121 / KW20 / Rd), this protein is Intermembrane phospholipid transport system permease protein MlaE.